We begin with the raw amino-acid sequence, 119 residues long: Methylglyoxal synthase (119 aa).

The region spanning 1–119 is the MGS-like domain; it reads MRIALIAHDK…GTADLIIKQF (119 aa). Residues histidine 8, lysine 12, 34 to 37, and 54 to 55 each bind substrate; these read TGTT and SG. Catalysis depends on aspartate 60, which acts as the Proton donor/acceptor. Histidine 87 contacts substrate.

It belongs to the methylglyoxal synthase family.

The enzyme catalyses dihydroxyacetone phosphate = methylglyoxal + phosphate. Its function is as follows. Catalyzes the formation of methylglyoxal from dihydroxyacetone phosphate. This Clostridium botulinum (strain Eklund 17B / Type B) protein is Methylglyoxal synthase.